Here is a 500-residue protein sequence, read N- to C-terminus: Histidine--tRNA ligase (500 aa).

This sequence belongs to the class-II aminoacyl-tRNA synthetase family. Homodimer.

The protein localises to the cytoplasm. It carries out the reaction tRNA(His) + L-histidine + ATP = L-histidyl-tRNA(His) + AMP + diphosphate + H(+). This Ruegeria sp. (strain TM1040) (Silicibacter sp.) protein is Histidine--tRNA ligase.